Consider the following 141-residue polypeptide: Holo-[acyl-carrier-protein] synthase (141 aa).

Residues D8 and E63 each contribute to the Mg(2+) site.

This sequence belongs to the P-Pant transferase superfamily. AcpS family. Mg(2+) serves as cofactor.

The protein resides in the cytoplasm. It catalyses the reaction apo-[ACP] + CoA = holo-[ACP] + adenosine 3',5'-bisphosphate + H(+). Transfers the 4'-phosphopantetheine moiety from coenzyme A to a Ser of acyl-carrier-protein. In Rhodospirillum centenum (strain ATCC 51521 / SW), this protein is Holo-[acyl-carrier-protein] synthase.